The primary structure comprises 126 residues: C-type natriuretic peptide (126 aa).

The signal sequence occupies residues 1 to 23; the sequence is MHLSQLIACALLLALLSLRPSEA. Residues 19 to 71 are disordered; that stretch reads RPSEAKPGTPPKVPRTPPGEELAEPQAAGGNQKKGDKTPGGGGANLKGDRSRL. A propeptide spanning residues 24–73 is cleaved from the precursor; it reads KPGTPPKVPRTPPGEELAEPQAAGGNQKKGDKTPGGGGANLKGDRSRLLR. The span at 26–35 shows a compositional bias: pro residues; that stretch reads GTPPKVPRTP. The cysteines at positions 110 and 126 are disulfide-linked.

It belongs to the natriuretic peptide family. Degraded by IDE (in vitro). As to expression, expressed exclusively in brain.

The protein localises to the secreted. In terms of biological role, hormone which plays a role in endochondral ossification through regulation of cartilaginous growth plate chondrocytes proliferation and differentiation. May also be vasoactive and natriuretic. Acts by specifically binding and stimulating NPR2 to produce cGMP. Binds the clearance receptor NPR3. This Rattus norvegicus (Rat) protein is C-type natriuretic peptide (Nppc).